An 886-amino-acid chain; its full sequence is MTTSPSSSADLLPKSWDPGAMESVIYQKWLNSGYFAADPASTKPGYSIVLPPPNVTGSLHMGHALEHTMMDALTRRKRMQGYEVLWQPGMDHAGIATQSVVEKQLAINGKIKEDFGRELFVDKVWDWKRESGGAIAGQMRRLGDGVDWSRDRFTMDDGLSRAVRMIFKRLYDAGLIYRAERLVNWSPVLRTALSDIEVIYDEIEGELISFRYGSLDDDEPHIVVATTRVETMLGDTGIAVHPDDKRYQHLVGTTLPHPFIDRELVIVADEHVDPEFGTGAVKVTPAHDPNDFEIGLRHNLPMPNVMDVKAVIVDTGTEFDGMDRFEARIAVREALAVQGRIVEEKRPYRHSVGHSERSGEVIEPRLSLQWWVRVESLAKAAGDAVRNGDTVIHPASMESRWFAWVDDMRDWCISRQLWWGHRIPIWYGPNGEQVCVGPDETPPEGWQQDPDVLDTWFSSALWPFSTLGWPQMTPELEKFYPTSILVTGYDILFFWVARMMMLGTFVGGDDAITLGGCRGPQVPFTDVFLHGLIRDEFGRKMSKSRGNVIDPLAWMDMFGADALRFTLARGSSPGGDLAIGEDHVRASRNFGTKLFNATRYALLNGAALVPLPALTALTDADRWILGRLEQVRAEVDSAFDGYEFSRACEALYHFAWDEFCDWYLELAKAQLADGLTHTTAVLAAALDTLLRLLHPVMPFITETLWQALTQLESLVIATWPEPSGISLDLVAAQRISDMQKLVTEIRRFRSDQGLVDRQKVPARLSGVEDSDLATQVGFVTSLALLTAASNDFRPSALLEVRLGPNKDRAVVVELDTSGTIDVAAERRRMEKDLAAAQKELASTAAKLANADFLAKAPEAVVVKIRDRQRMAKEETDRIIARLAGLQ.

The short motif at 53 to 63 (PNVTGSLHMGH) is the 'HIGH' region element. The short motif at 540-544 (KMSKS) is the 'KMSKS' region element. ATP is bound at residue lysine 543. Residues 820–851 (IDVAAERRRMEKDLAAAQKELASTAAKLANAD) are a coiled coil.

The protein belongs to the class-I aminoacyl-tRNA synthetase family. ValS type 1 subfamily. In terms of assembly, monomer.

It is found in the cytoplasm. It carries out the reaction tRNA(Val) + L-valine + ATP = L-valyl-tRNA(Val) + AMP + diphosphate. Catalyzes the attachment of valine to tRNA(Val). As ValRS can inadvertently accommodate and process structurally similar amino acids such as threonine, to avoid such errors, it has a 'posttransfer' editing activity that hydrolyzes mischarged Thr-tRNA(Val) in a tRNA-dependent manner. This Mycobacterium leprae (strain TN) protein is Valine--tRNA ligase.